Consider the following 475-residue polypeptide: Ribulose bisphosphate carboxylase large chain (475 aa).

A propeptide spanning residues 1–2 (MS) is cleaved from the precursor. Proline 3 carries the post-translational modification N-acetylproline. Position 14 is an N6,N6,N6-trimethyllysine (lysine 14). Residues asparagine 123 and threonine 173 each contribute to the substrate site. Lysine 175 acts as the Proton acceptor in catalysis. A substrate-binding site is contributed by lysine 177. The Mg(2+) site is built by lysine 201, aspartate 203, and glutamate 204. Lysine 201 is subject to N6-carboxylysine. Histidine 294 acts as the Proton acceptor in catalysis. Arginine 295, histidine 327, and serine 379 together coordinate substrate.

This sequence belongs to the RuBisCO large chain family. Type I subfamily. Heterohexadecamer of 8 large chains and 8 small chains; disulfide-linked. The disulfide link is formed within the large subunit homodimers. Mg(2+) serves as cofactor. The disulfide bond which can form in the large chain dimeric partners within the hexadecamer appears to be associated with oxidative stress and protein turnover.

The protein localises to the plastid. The protein resides in the chloroplast. The catalysed reaction is 2 (2R)-3-phosphoglycerate + 2 H(+) = D-ribulose 1,5-bisphosphate + CO2 + H2O. The enzyme catalyses D-ribulose 1,5-bisphosphate + O2 = 2-phosphoglycolate + (2R)-3-phosphoglycerate + 2 H(+). Its function is as follows. RuBisCO catalyzes two reactions: the carboxylation of D-ribulose 1,5-bisphosphate, the primary event in carbon dioxide fixation, as well as the oxidative fragmentation of the pentose substrate in the photorespiration process. Both reactions occur simultaneously and in competition at the same active site. The protein is Ribulose bisphosphate carboxylase large chain of Chara vulgaris (Common stonewort).